A 154-amino-acid polypeptide reads, in one-letter code: Anaerobic ribonucleoside-triphosphate reductase-activating protein (154 aa).

The [4Fe-4S] cluster site is built by Cys26, Cys30, and Cys33. Residues 32 to 34 (GCY) and Gly74 each bind S-adenosyl-L-methionine.

Belongs to the organic radical-activating enzymes family. Forms a tetramer composed of two NrdD and two NrdG subunits. [4Fe-4S] cluster serves as cofactor.

The protein resides in the cytoplasm. The enzyme catalyses glycyl-[protein] + reduced [flavodoxin] + S-adenosyl-L-methionine = glycin-2-yl radical-[protein] + semiquinone [flavodoxin] + 5'-deoxyadenosine + L-methionine + H(+). Its function is as follows. Activation of anaerobic ribonucleoside-triphosphate reductase under anaerobic conditions by generation of an organic free radical, using S-adenosylmethionine and reduced flavodoxin as cosubstrates to produce 5'-deoxy-adenosine. In Escherichia coli O157:H7, this protein is Anaerobic ribonucleoside-triphosphate reductase-activating protein (nrdG).